The following is a 386-amino-acid chain: MKIHEYQGKEIFRKYGVPTPKGILAVSANDAEAAAKELGTSVVVVKAQIHAGGRGKGGGVKLAKSPAEAKELAKQMLGMKLKTIQTGPEGQTVHKVYIEEGLAIGQELYLGVTLDRATSRITFMASREGGVEIEEVAEKHPEKILRESVDPAVGFQDFQGRKLAFGLGLTGPTVNKFTQFCSALYRMFMDTDASLVEINPLVILKDGGVVALDAKVTFDENALYRHKDLLEYRDLAEEEPREIQAKEWDLAYIALDGNIGCMVNGAGLAMATMDTIKLVGGSPANFLDVGGGANKEKVTAAFKLILADPAVKAVLVNIFGGIMKCDVIAEGIIAAAKEVQLKVPLVVRLEGTNVEKGKELLSNSGLAITPADNLRQAAEKAVAAVK.

An ATP-grasp domain is found at 9 to 244 (KEIFRKYGVP…LAEEEPREIQ (236 aa)). ATP is bound by residues lysine 46, 53-55 (GRG), glutamate 99, leucine 102, and glutamate 107. Residues asparagine 199 and aspartate 213 each contribute to the Mg(2+) site. Residues asparagine 264 and 321–323 (GIM) contribute to the substrate site.

This sequence belongs to the succinate/malate CoA ligase beta subunit family. Heterotetramer of two alpha and two beta subunits. Mg(2+) is required as a cofactor.

It catalyses the reaction succinate + ATP + CoA = succinyl-CoA + ADP + phosphate. The enzyme catalyses GTP + succinate + CoA = succinyl-CoA + GDP + phosphate. The protein operates within carbohydrate metabolism; tricarboxylic acid cycle; succinate from succinyl-CoA (ligase route): step 1/1. In terms of biological role, succinyl-CoA synthetase functions in the citric acid cycle (TCA), coupling the hydrolysis of succinyl-CoA to the synthesis of either ATP or GTP and thus represents the only step of substrate-level phosphorylation in the TCA. The beta subunit provides nucleotide specificity of the enzyme and binds the substrate succinate, while the binding sites for coenzyme A and phosphate are found in the alpha subunit. This is Succinate--CoA ligase [ADP-forming] subunit beta from Myxococcus xanthus (strain DK1622).